A 71-amino-acid polypeptide reads, in one-letter code: MKEGIHPEYKETTITCVCGNVITTRSTKQDIKVEICSQCHPFITGKQKIIDTAGRVERFNQKYAGVNNKKA.

Zn(2+)-binding residues include Cys-16, Cys-18, Cys-36, and Cys-39.

The protein belongs to the bacterial ribosomal protein bL31 family. Type A subfamily. In terms of assembly, part of the 50S ribosomal subunit. The cofactor is Zn(2+).

Binds the 23S rRNA. This is Large ribosomal subunit protein bL31 from Syntrophus aciditrophicus (strain SB).